A 195-amino-acid chain; its full sequence is Large ribosomal subunit protein uL18 (195 aa).

Belongs to the universal ribosomal protein uL18 family. As to quaternary structure, part of the 50S ribosomal subunit. Contacts the 5S and 23S rRNAs.

In terms of biological role, this is one of the proteins that bind and probably mediate the attachment of the 5S RNA into the large ribosomal subunit, where it forms part of the central protuberance. In Korarchaeum cryptofilum (strain OPF8), this protein is Large ribosomal subunit protein uL18.